The following is a 234-amino-acid chain: uncharacterized protein (234 aa).

In terms of domain architecture, HTH tetR-type spans 24-83 (VERRNELVDGTIEAIRRHGRFLSMDEIAAEIGVSKTVLYRYFVDKNDLTTAVMMRFTQTT). Positions 46–65 (SMDEIAAEIGVSKTVLYRYF) form a DNA-binding region, H-T-H motif.

This is an uncharacterized protein from Mycobacterium tuberculosis (strain CDC 1551 / Oshkosh).